The sequence spans 896 residues: Protein translocase subunit SecA (896 aa).

ATP is bound by residues glutamine 87, 105–109 (GEGKT), and aspartate 507. A disordered region spans residues 853–879 (ESLSENDEASETQTFRRQEKKIGRNDP). Residues 866-876 (TFRRQEKKIGR) show a composition bias toward basic and acidic residues. Zn(2+) contacts are provided by cysteine 880, cysteine 882, cysteine 891, and histidine 892.

The protein belongs to the SecA family. As to quaternary structure, monomer and homodimer. Part of the essential Sec protein translocation apparatus which comprises SecA, SecYEG and auxiliary proteins SecDF-YajC and YidC. Requires Zn(2+) as cofactor.

Its subcellular location is the cell inner membrane. It is found in the cytoplasm. It catalyses the reaction ATP + H2O + cellular proteinSide 1 = ADP + phosphate + cellular proteinSide 2.. Part of the Sec protein translocase complex. Interacts with the SecYEG preprotein conducting channel. Has a central role in coupling the hydrolysis of ATP to the transfer of proteins into and across the cell membrane, serving both as a receptor for the preprotein-SecB complex and as an ATP-driven molecular motor driving the stepwise translocation of polypeptide chains across the membrane. This Legionella pneumophila subsp. pneumophila (strain Philadelphia 1 / ATCC 33152 / DSM 7513) protein is Protein translocase subunit SecA.